The sequence spans 510 residues: Maturase K (510 aa).

The protein belongs to the intron maturase 2 family. MatK subfamily.

The protein localises to the plastid. It localises to the chloroplast. Its function is as follows. Usually encoded in the trnK tRNA gene intron. Probably assists in splicing its own and other chloroplast group II introns. The protein is Maturase K of Grahamia bracteata.